The primary structure comprises 105 residues: Small ribosomal subunit protein uS10 (105 aa).

Belongs to the universal ribosomal protein uS10 family. Part of the 30S ribosomal subunit.

Involved in the binding of tRNA to the ribosomes. The polypeptide is Small ribosomal subunit protein uS10 (Anaplasma phagocytophilum (strain HZ)).